A 61-amino-acid polypeptide reads, in one-letter code: uncharacterized protein (61 aa).

A disordered region spans residues 1–40 (MRRGGEPQCDGREFRIASSPAREREDDNETAPPQTSAAQE). Residues 9-25 (CDGREFRIASSPARERE) are compositionally biased toward basic and acidic residues.

This is an uncharacterized protein from Caenorhabditis elegans.